A 206-amino-acid polypeptide reads, in one-letter code: Small ribosomal subunit protein uS4 (206 aa).

One can recognise an S4 RNA-binding domain in the interval 96 to 156 (CRLDNVVYRM…EKAKNQLRIV (61 aa)).

This sequence belongs to the universal ribosomal protein uS4 family. In terms of assembly, part of the 30S ribosomal subunit. Contacts protein S5. The interaction surface between S4 and S5 is involved in control of translational fidelity.

In terms of biological role, one of the primary rRNA binding proteins, it binds directly to 16S rRNA where it nucleates assembly of the body of the 30S subunit. Functionally, with S5 and S12 plays an important role in translational accuracy. This is Small ribosomal subunit protein uS4 from Pseudomonas fluorescens (strain Pf0-1).